Consider the following 57-residue polypeptide: Sperm histone (57 aa).

Residues 1 to 57 (MARYRRTRTRSRSRRRRRSRRRRSSRRRRYGRSRRSYRSVGRRRRRYGRRRRRRRRY) form a disordered region. Thr9 is modified (phosphothreonine).

Belongs to the protamine P1 family. Testis.

It is found in the nucleus. The protein localises to the chromosome. Its function is as follows. Protamines substitute for histones in the chromatin of sperm during the haploid phase of spermatogenesis. They compact sperm DNA into a highly condensed, stable and inactive complex. The chain is Sperm histone from Coturnix japonica (Japanese quail).